The following is a 70-amino-acid chain: DNA gyrase inhibitor YacG (70 aa).

The segment covering 1–15 (MPEDKKAAAKVEPLR) has biased composition (basic and acidic residues). Residues 1–22 (MPEDKKAAAKVEPLRKTRPCPE) form a disordered region. 4 residues coordinate Zn(2+): cysteine 20, cysteine 23, cysteine 35, and cysteine 39.

This sequence belongs to the DNA gyrase inhibitor YacG family. As to quaternary structure, interacts with GyrB. Zn(2+) serves as cofactor.

Inhibits all the catalytic activities of DNA gyrase by preventing its interaction with DNA. Acts by binding directly to the C-terminal domain of GyrB, which probably disrupts DNA binding by the gyrase. This Rhizobium johnstonii (strain DSM 114642 / LMG 32736 / 3841) (Rhizobium leguminosarum bv. viciae) protein is DNA gyrase inhibitor YacG.